A 295-amino-acid polypeptide reads, in one-letter code: 33 kDa chaperonin (295 aa).

2 disulfides stabilise this stretch: Cys238–Cys240 and Cys271–Cys274.

Belongs to the HSP33 family. In terms of processing, under oxidizing conditions two disulfide bonds are formed involving the reactive cysteines. Under reducing conditions zinc is bound to the reactive cysteines and the protein is inactive.

It is found in the cytoplasm. In terms of biological role, redox regulated molecular chaperone. Protects both thermally unfolding and oxidatively damaged proteins from irreversible aggregation. Plays an important role in the bacterial defense system toward oxidative stress. This chain is 33 kDa chaperonin, found in Levilactobacillus brevis (strain ATCC 367 / BCRC 12310 / CIP 105137 / JCM 1170 / LMG 11437 / NCIMB 947 / NCTC 947) (Lactobacillus brevis).